The sequence spans 1960 residues: Myosin-9 (1960 aa).

Residue Ala-2 is modified to N-acetylalanine. The segment at 2 to 838 (AQQAADKYLY…RLFTKVKPLL (837 aa)) is mediates interaction with LIMCH1. Lys-8 is subject to N6-acetyllysine. Tyr-11 bears the Phosphotyrosine mark. One can recognise a Myosin N-terminal SH3-like domain in the interval 27–77 (AAKKLVWVPSDKSGFEPASLKEEVGEEAIVELVENGKKVKVNKDDIQKMNP). The region spanning 81 to 776 (SKVEDMAELT…VLAHLEEERD (696 aa)) is the Myosin motor domain. Lys-102 bears the N6-acetyllysine mark. 174–181 (GESGAGKT) contributes to the ATP binding site. Residues Lys-299, Lys-435, and Lys-613 each carry the N6-acetyllysine modification. Residue Ser-628 is modified to Phosphoserine. The interval 654 to 676 (LAKLMATLRNTNPNFVRCIIPNH) is actin-binding. Tyr-754 bears the Phosphotyrosine mark. One can recognise an IQ domain in the interval 779–808 (ITDVIIGFQACCRGYLARKAFAKRQQQLTA). Residues 837–1926 (LLQVSRQEEE…LKNKLRRGDL (1090 aa)) adopt a coiled-coil conformation. Position 850 is an N6-succinyllysine (Lys-850). N6-acetyllysine occurs at positions 860, 975, and 1024. A Phosphoserine modification is found at Ser-1114. Residues 1117-1137 (QEDLESERASRNKAEKQKRDL) form a disordered region. Over residues 1122-1137 (SERASRNKAEKQKRDL) the composition is skewed to basic and acidic residues. Residues Lys-1234, Lys-1249, Lys-1357, Lys-1392, Lys-1404, Lys-1410, Lys-1459, and Lys-1638 each carry the N6-acetyllysine modification. Residue Lys-1669 is modified to N6-succinyllysine. Phosphoserine is present on Ser-1714. N6-acetyllysine occurs at positions 1793, 1802, and 1845. A disordered region spans residues 1877 to 1918 (RQLEEAEEEAQRANASRRKLQRELEDATETADAMNREVSSLK). The residue at position 1923 (Arg-1923) is an Omega-N-methylarginine. Positions 1934 to 1960 (VARKGAGDCSDEEVDGKADGAEAKAAE) are disordered. Ser-1943 carries the post-translational modification Phosphoserine. Residues 1948 to 1960 (DGKADGAEAKAAE) show a composition bias toward basic and acidic residues.

It belongs to the TRAFAC class myosin-kinesin ATPase superfamily. Myosin family. Myosin is a hexameric protein that consists of 2 heavy chain subunits (MHC), 2 alkali light chain subunits (MLC) and 2 regulatory light chain subunits (MLC-2). Interacts with RASIP1. Interacts with DDR1. Interacts with PDLIM2. Interacts with SVIL. Interacts with HTRA3. Interacts with Myo7a. Interacts with CFAP95. Interacts with LIMCH1; independently of the integration of MYH9 into the myosin complex. Interacts with RAB3A. Interacts with ZBED4. Interacts with S100A4; this interaction increases cell motility. In terms of processing, ISGylated. Ubiquitination.

It localises to the cytoplasm. Its subcellular location is the cytoskeleton. The protein resides in the cell cortex. The protein localises to the cytoplasmic vesicle. It is found in the secretory vesicle. It localises to the cortical granule. In terms of biological role, cellular myosin that appears to play a role in cytokinesis, cell shape, and specialized functions such as secretion and capping. Required for cortical actin clearance prior to oocyte exocytosis. Promotes cell motility in conjunction with S100A4. During cell spreading, plays an important role in cytoskeleton reorganization, focal contact formation (in the margins but not the central part of spreading cells), and lamellipodial retraction; this function is mechanically antagonized by MYH10. This is Myosin-9 (MYH9) from Canis lupus familiaris (Dog).